A 60-amino-acid chain; its full sequence is Large ribosomal subunit protein uL29 (60 aa).

Belongs to the universal ribosomal protein uL29 family.

This chain is Large ribosomal subunit protein uL29, found in Fusobacterium nucleatum subsp. nucleatum (strain ATCC 25586 / DSM 15643 / BCRC 10681 / CIP 101130 / JCM 8532 / KCTC 2640 / LMG 13131 / VPI 4355).